The sequence spans 87 residues: MRLFLSLPVLVVVLAMVLEGPAPAQAAPEISSTLERIPDKLKEFGNTLENKARAAIESIKQSDLPAKTRNWFSETFNKVEQLKTTFS.

Residues 1–26 (MRLFLSLPVLVVVLAMVLEGPAPAQA) form the signal peptide.

It belongs to the apolipoprotein C1 family.

The protein localises to the secreted. Its function is as follows. Inhibitor of lipoprotein binding to the low density lipoprotein (LDL) receptor, LDL receptor-related protein, and very low density lipoprotein (VLDL) receptor. Associates with high density lipoproteins (HDL) and the triacylglycerol-rich lipoproteins in the plasma and makes up about 10% of the protein of the VLDL and 2% of that of HDL. Appears to interfere directly with fatty acid uptake and is also the major plasma inhibitor of cholesteryl ester transfer protein (CETP). Binds free fatty acids and reduces their intracellular esterification. Modulates the interaction of APOE with beta-migrating VLDL and inhibits binding of beta-VLDL to the LDL receptor-related protein. The protein is Apolipoprotein C-I (APOC1) of Zalophus californianus (California sealion).